A 608-amino-acid chain; its full sequence is 65-kDa microtubule-associated protein 6 (608 aa).

Coiled-coil stretches lie at residues 164–186 (DLTLRNLNEYQTHLRTLQKEKSD), 368–388 (ELLANIEMQINKIKDEAQSRK), and 467–503 (VRLVNILEDYKLTRKQQEEEKKRYRDQKKRQDLLLTQ). The interval 501–565 (LTQRESIYGS…RSYSGHHRQN (65 aa)) is disordered. Over residues 510-523 (SKPSPRRSSSFRKP) the composition is skewed to low complexity. Position 513 is a phosphoserine (S513). A compositionally biased stretch (polar residues) spans 526–535 (FNISNGNGSV). Position 604 is a phosphoserine (S604).

Belongs to the MAP65/ASE1 family. In terms of assembly, forms a dimer. Binds to polymerized centrally located endocytic MT.

It is found in the nucleus. Its subcellular location is the cytoplasm. It localises to the mitochondrion. The protein localises to the cytoskeleton. The protein resides in the phragmoplast. Microtubule-associated protein that mediates the formation of a mesh-like stable and dense network formed by individual microtubules (MT). Confers MT resistance to high concentration of NaCl. This Arabidopsis thaliana (Mouse-ear cress) protein is 65-kDa microtubule-associated protein 6 (MAP65-6).